A 185-amino-acid chain; its full sequence is GTP-dependent dephospho-CoA kinase (185 aa).

Positions 50, 52, 73, 75, and 128 each coordinate GTP.

Belongs to the GTP-dependent DPCK family.

It carries out the reaction 3'-dephospho-CoA + GTP = GDP + CoA + H(+). It functions in the pathway cofactor biosynthesis; coenzyme A biosynthesis. Catalyzes the GTP-dependent phosphorylation of the 3'-hydroxyl group of dephosphocoenzyme A to form coenzyme A (CoA). This Aeropyrum pernix (strain ATCC 700893 / DSM 11879 / JCM 9820 / NBRC 100138 / K1) protein is GTP-dependent dephospho-CoA kinase.